The following is a 170-amino-acid chain: Cytochrome c-type biogenesis protein CcmE (170 aa).

The Cytoplasmic portion of the chain corresponds to 1–7 (MTRKKRR). The chain crosses the membrane as a helical; Signal-anchor for type II membrane protein span at residues 8–28 (LILIAACGSVLALAVGLILYA). The Periplasmic portion of the chain corresponds to 29–170 (MSGSIVFFRS…DSTLGPRSER (142 aa)). Residues His122 and Tyr126 each contribute to the heme site. Residues 132 to 170 (ADALKAQGRWQEGGPNRGGPAPKPATAAADSTLGPRSER) are disordered.

The protein belongs to the CcmE/CycJ family.

It localises to the cell inner membrane. Functionally, heme chaperone required for the biogenesis of c-type cytochromes. Transiently binds heme delivered by CcmC and transfers the heme to apo-cytochromes in a process facilitated by CcmF and CcmH. This chain is Cytochrome c-type biogenesis protein CcmE, found in Methylobacterium radiotolerans (strain ATCC 27329 / DSM 1819 / JCM 2831 / NBRC 15690 / NCIMB 10815 / 0-1).